Consider the following 405-residue polypeptide: Putative polysaccharide ligase RT0347 (405 aa).

A run of 10 helical transmembrane segments spans residues 23–43, 77–97, 120–140, 156–178, 201–221, 227–247, 270–290, 322–342, 353–375, and 377–397; these read IAAT…ISFI, LFIA…NSLV, ILYL…LFFI, FGLY…VIII, ISDS…FILA, IFFK…PIIA, LFIW…GYGF, ILQI…CLVY, ISNF…MISY, and IWQT…KLLV.

This sequence belongs to the O-antigen ligase family.

The protein resides in the membrane. In Rickettsia typhi (strain ATCC VR-144 / Wilmington), this protein is Putative polysaccharide ligase RT0347.